Consider the following 142-residue polypeptide: Transcription antitermination protein NusB (142 aa).

It belongs to the NusB family.

Involved in transcription antitermination. Required for transcription of ribosomal RNA (rRNA) genes. Binds specifically to the boxA antiterminator sequence of the ribosomal RNA (rrn) operons. The chain is Transcription antitermination protein NusB from Streptococcus uberis (strain ATCC BAA-854 / 0140J).